The chain runs to 97 residues: uncharacterized protein (97 aa).

This is an uncharacterized protein from Archaeoglobus fulgidus (strain ATCC 49558 / DSM 4304 / JCM 9628 / NBRC 100126 / VC-16).